A 1136-amino-acid chain; its full sequence is MFSRKKRELMKTPSISKKNRAGSPSPQPSGELPRKDGADAVFPGPSLEPPAGSSGVKATGTLKRPTSLSRHASAAGFPLSGAASWTLGRSHRSPLTAASPGELPTEGAGPDVVEDISHLLADVARFAEGLEKLKECVLRDDLLEARRPRAHECLGEALRVMHQIISKYPLLNTVETLTAAGTLIAKVKAFHYESNNDLEKQEFEKALETIAVAFSSTVSEFLMGEVDSSTLLAVPPGDSSQSMESLYGPGSEGTPPSLEDCDAGCLPAEEVDVLLQRCEGGVDAALLYAKNMAKYMKDLISYLEKRTTLEMEFAKGLQKIAHNCRQSVMQEPHMPLLSIYSLALEQDLEFGHSMVQAVGTLQTQTFMQPLTLRRLEHEKRRKEIKEAWHRAQRKLQEAESNLRKAKQGYVQRCEDHDKARFLVAKAEEEQAGSAPGAGSTATKTLDKRRRLEEEAKNKAEEAMATYRTCVADAKTQKQELEDTKVTALRQIQEVIRQSDQTIKSATISYYQMMHMQTAPLPVHFQMLCESSKLYDPGQQYASHVRQLQRDQEPDVHYDFEPHVSANAWSPVMRARKSSFNVSDVARPEAAGSPPEEGGCTEGTPAKDHRAGRGHQVHKSWPLSISDSDSGLDPGPGAGDFKKFERTSSSGTMSSTEELVDPDGGAGASAFEQADLNGMTPELPVAVPSGPFRHEGLSKAARTHRLRKLRTPAKCRECNSYVYFQGAECEECCLACHKKCLETLAIQCGHKKLQGRLQLFGQDFSHAARSAPDGVPFIVKKCVCEIERRALRTKGIYRVNGVKTRVEKLCQAFENGKELVELSQASPHDISNVLKLYLRQLPEPLISFRLYHELVGLAKDSLKAEAEAKAASRGRQDGSESEAVAVALAGRLRELLRDLPPENRASLQYLLRHLRRIVEVEQDNKMTPGNLGIVFGPTLLRPRPTEATVSLSSLVDYPHQARVIETLIVHYGLVFEEEPEETPGGQDESSNQRAEVVVQVPYLEAGEAVVYPLQEAAADGCRESRVVSNDSDSDLEEASELLSSSEASALGHLSFLEQQQSEASLEVASGSHSGSEEQLEATAREDGDGDEDGPAQQLSGFNTNQSNNVLQAPLPPMRLRGGRMTLGSCRERQPEFV.

2 disordered regions span residues 1–73 (MFSR…RHAS) and 91–110 (HRSP…GAGP). Phosphoserine is present on residues Ser23, Ser25, Ser73, Ser93, and Ser99. The F-BAR domain maps to 269–539 (EEVDVLLQRC…SSKLYDPGQQ (271 aa)). Coiled coils occupy residues 376-412 (EHEK…YVQR) and 440-499 (TATK…RQSD). Ser569, Ser578, Ser592, and Ser619 each carry phosphoserine. The segment at 583–662 (DVARPEAAGS…SSTEELVDPD (80 aa)) is disordered. A compositionally biased stretch (low complexity) spans 646 to 655 (TSSSGTMSST). The Phorbol-ester/DAG-type zinc finger occupies 702–747 (THRLRKLRTPAKCRECNSYVYFQGAECEECCLACHKKCLETLAIQC). The Rho-GAP domain occupies 761 to 974 (QDFSHAARSA…TLIVHYGLVF (214 aa)). 4 positions are modified to phosphoserine: Ser949, Ser1027, Ser1030, and Ser1032. Residues 1061 to 1136 (EASLEVASGS…SCRERQPEFV (76 aa)) are disordered. Residues 1095–1109 (QQLSGFNTNQSNNVL) show a composition bias toward polar residues.

As to quaternary structure, HA-1 forms a complex with MHC class I HLA-A*0201. In terms of tissue distribution, expressed on cells of the hematopoietic lineage. Detected in dendritic cells and epidermal Langerhans cells. Expressed in peripheral blood mononuclear cells, in all leukemia/lymphoma cell lines. Detected also in some solid tumors and tissues such as cancerous and non-cancerous tissue.

The protein localises to the cytoplasm. It is found in the cell projection. The protein resides in the ruffle membrane. Functionally, contains a GTPase activator for the Rho-type GTPases (RhoGAP) domain that would be able to negatively regulate the actin cytoskeleton as well as cell spreading. However, also contains N-terminally a BAR-domin which is able to play an autoinhibitory effect on this RhoGAP activity. Its function is as follows. Precursor of the histocompatibility antigen HA-1. More generally, minor histocompatibility antigens (mHags) refer to immunogenic peptide which, when complexed with MHC, can generate an immune response after recognition by specific T-cells. The peptides are derived from polymorphic intracellular proteins, which are cleaved by normal pathways of antigen processing. The binding of these peptides to MHC class I or class II molecules and its expression on the cell surface can stimulate T-cell responses and thereby trigger graft rejection or graft-versus-host disease (GVHD) after hematopoietic stem cell transplantation from HLA-identical sibling donor. GVHD is a frequent complication after bone marrow transplantation (BMT), due to mismatch of minor histocompatibility antigen in HLA-matched sibling marrow transplants. Specifically, mismatching for mHag HA-1 which is recognized as immunodominant, is shown to be associated with the development of severe GVHD after HLA-identical BMT. HA-1 is presented to the cell surface by MHC class I HLA-A*0201, but also by other HLA-A alleles. This complex specifically elicits donor-cytotoxic T-lymphocyte (CTL) reactivity against hematologic malignancies after treatment by HLA-identical allogenic BMT. It induces cell recognition and lysis by CTL. This Homo sapiens (Human) protein is Rho GTPase-activating protein 45.